The chain runs to 303 residues: UDP-3-O-acyl-N-acetylglucosamine deacetylase (303 aa).

Residues histidine 78, histidine 237, and aspartate 241 each contribute to the Zn(2+) site. Histidine 264 (proton donor) is an active-site residue.

Belongs to the LpxC family. Requires Zn(2+) as cofactor.

The enzyme catalyses a UDP-3-O-[(3R)-3-hydroxyacyl]-N-acetyl-alpha-D-glucosamine + H2O = a UDP-3-O-[(3R)-3-hydroxyacyl]-alpha-D-glucosamine + acetate. It participates in glycolipid biosynthesis; lipid IV(A) biosynthesis; lipid IV(A) from (3R)-3-hydroxytetradecanoyl-[acyl-carrier-protein] and UDP-N-acetyl-alpha-D-glucosamine: step 2/6. In terms of biological role, catalyzes the hydrolysis of UDP-3-O-myristoyl-N-acetylglucosamine to form UDP-3-O-myristoylglucosamine and acetate, the committed step in lipid A biosynthesis. The polypeptide is UDP-3-O-acyl-N-acetylglucosamine deacetylase (Saccharophagus degradans (strain 2-40 / ATCC 43961 / DSM 17024)).